Consider the following 166-residue polypeptide: Deoxyuridine 5'-triphosphate nucleotidohydrolase (166 aa).

The disordered stretch occupies residues 1 to 24 (MACVNEPSPKLQKLDRNGIHGDSS). Glu-138 is a binding site for Mg(2+).

Belongs to the dUTPase family. As to quaternary structure, homotrimer. Requires Mg(2+) as cofactor.

It catalyses the reaction dUTP + H2O = dUMP + diphosphate + H(+). It participates in pyrimidine metabolism; dUMP biosynthesis; dUMP from dCTP (dUTP route): step 2/2. Functionally, this enzyme is involved in nucleotide metabolism: it produces dUMP, the immediate precursor of thymidine nucleotides and it decreases the intracellular concentration of dUTP, preventing uracil incorporation into DNA. The sequence is that of Deoxyuridine 5'-triphosphate nucleotidohydrolase (DUT) from Arabidopsis thaliana (Mouse-ear cress).